The chain runs to 421 residues: Hydrolyase poxO (421 aa).

Catalysis depends on Ser239, which acts as the Nucleophile.

Belongs to the AB hydrolase superfamily. FUS2 hydrolase family. In terms of assembly, homodimer.

Its pathway is secondary metabolite biosynthesis. Hydrolyase; part of the gene cluster that mediates the biosynthesis of oxaleimides, cytotoxic compounds containing an unusual disubstituted succinimide moiety. The first step of the pathway is provided by the HR-PKS poxF that serves in a new mode of collaborative biosynthesis with the PKS-NRPS poxE, by providing the olefin containing amino acid substrate via the synthesis of an ACP-bound dec-4-enoate. The cytochrome P450 monooxygenase poxM-catalyzed oxidation at the alpha-position creates the enzyme-bound 2-hydroxydec-4-enoyl-ACP thioester, which may be prone to spontaneous hydrolysis to yield 2-hydroxydec-4-enoic acid due to increased electrophilicity of the carbonyl. 2-hydroxydec-4-enoic acid can then be further oxidized by poxM to yield the alpha-ketoacid 2-oxodec-4-enoicacid, which is reductively aminated by the aminotransferase poxL to yield (S,E)-2-aminodec-4-enoic acid. The Hybrid PKS-NRPS synthetase poxE then performs condensation between the octaketide product of its PKS modules and the amino group of (S,E)-2-aminodec-4-enoic acid which is activated and incorporated by the adenylation domain. The resulting aminoacyl product can be cyclized by the Diels-Alderase PoxQ and reductively released by the reductive (R) domain of poxE to yield an aldehyde intermediate. The released aldehyde is then substrate for a Knoevenagel condensation by the hydrolyase poxO followed by an oxidation at the 5-position of the pyrrolidone ring. The presence of the olefin from the amino acid building block allows for migration of the substituted allyl group to occur. This allylic transposition reaction takes place in a conjugate addition, semipinacol-like fashion to yield a succinimide intermediate. Iterative two-electron oxidations of the C7 methyl of the succinimide intermediate to the carboxylic acid can be catalyzed by one of two remaining cytochrome P450 monooxygenasess poxC or poxD to yield oxaleimide A. Subsequent oxidation yields the maleimide scaffold oxaleimide I. Both oxaleimide A and oxaleimide I can undergo oxidative modifications in the decalin ring to yield the series of products oxaleimides B to H. This chain is Hydrolyase poxO, found in Penicillium oxalicum.